A 412-amino-acid polypeptide reads, in one-letter code: DnaJ homolog subfamily A member 2 (412 aa).

The J domain occupies K8–G70. K39 carries the post-translational modification N6-acetyllysine. Residues S78 and S123 each carry the phosphoserine modification. The CR-type zinc-finger motif lies at G130–V214. A Glycyl lysine isopeptide (Lys-Gly) (interchain with G-Cter in SUMO2) cross-link involves residue K134. Positions 143 and 146 each coordinate Zn(2+). Residues C143–G150 form a CXXCXGXG motif repeat. At K152 the chain carries N6-acetyllysine. 6 residues coordinate Zn(2+): C159, C162, C186, C189, C202, and C205. CXXCXGXG motif repeat units lie at residues C159–G166, C186–G193, and C202–K209. The disordered stretch occupies residues P359–Q412. The residue at position 391 (Y391) is a Phosphotyrosine. A phosphoserine mark is found at S394 and S395. C409 is subject to Cysteine methyl ester. A lipid anchor (S-farnesyl cysteine) is attached at C409. Residues A410–Q412 constitute a propeptide, removed in mature form.

It is found in the membrane. In terms of biological role, co-chaperone of Hsc70. Stimulates ATP hydrolysis and the folding of unfolded proteins mediated by HSPA1A/B (in vitro). This is DnaJ homolog subfamily A member 2 (DNAJA2) from Bos taurus (Bovine).